The sequence spans 439 residues: UDP-N-acetylmuramate--L-alanine ligase (439 aa).

113–119 (GSHGKTS) contributes to the ATP binding site.

This sequence belongs to the MurCDEF family.

Its subcellular location is the cytoplasm. It catalyses the reaction UDP-N-acetyl-alpha-D-muramate + L-alanine + ATP = UDP-N-acetyl-alpha-D-muramoyl-L-alanine + ADP + phosphate + H(+). It participates in cell wall biogenesis; peptidoglycan biosynthesis. Cell wall formation. In Lactobacillus delbrueckii subsp. bulgaricus (strain ATCC 11842 / DSM 20081 / BCRC 10696 / JCM 1002 / NBRC 13953 / NCIMB 11778 / NCTC 12712 / WDCM 00102 / Lb 14), this protein is UDP-N-acetylmuramate--L-alanine ligase.